The chain runs to 231 residues: Proteasome subunit alpha type-2 (231 aa).

The protein belongs to the peptidase T1A family. In terms of assembly, the 26S proteasome consists of a 20S proteasome core and two 19S regulatory subunits. The 20S proteasome core is composed of 28 subunits that are arranged in four stacked rings, resulting in a barrel-shaped structure. The two end rings are each formed by seven alpha subunits, and the two central rings are each formed by seven beta subunits. The catalytic chamber with the active sites is on the inside of the barrel.

Its subcellular location is the cytoplasm. The protein resides in the nucleus. In terms of biological role, the proteasome is a multicatalytic proteinase complex which is characterized by its ability to cleave peptides with Arg, Phe, Tyr, Leu, and Glu adjacent to the leaving group at neutral or slightly basic pH. The proteasome has an ATP-dependent proteolytic activity. The sequence is that of Proteasome subunit alpha type-2 (pas-2) from Caenorhabditis elegans.